We begin with the raw amino-acid sequence, 1115 residues long: PAN2-PAN3 deadenylation complex catalytic subunit PAN2 (1115 aa).

WD repeat units follow at residues 27–66 (NRDK…YTRY), 112–153 (AAFS…GCLD), 155–194 (LLNY…TIKS), 197–236 (AHSA…YDLR), and 295–334 (HPCQ…MGMF). The linker stretch occupies residues 337–473 (TPEMLAYPDY…IQTYTSINKY (137 aa)). The USP domain occupies 474 to 855 (EVPPAYSRLP…TPEIIIYCDA (382 aa)). 4 residues coordinate Zn(2+): Cys660, His662, Cys713, and Cys716. An Exonuclease domain is found at 907 to 1079 (VAIDAEFVSL…EDAHTALILY (173 aa)). 4 residues coordinate a divalent metal cation: Asp910, Glu912, Asp1020, and Asp1071.

It belongs to the peptidase C19 family. PAN2 subfamily. In terms of assembly, forms a heterotrimer with an asymmetric homodimer of the regulatory subunit PAN3 to form the poly(A)-nuclease (PAN) deadenylation complex. A divalent metal cation is required as a cofactor.

Its subcellular location is the cytoplasm. The enzyme catalyses Exonucleolytic cleavage of poly(A) to 5'-AMP.. Its activity is regulated as follows. Positively regulated by the regulatory subunit PAN3. Negatively regulated by PAB1-binding protein PBP1. Inhibited under stress conditions. Inhibition of deadenylation under stress increases mRNA stability, which may be a mechanism to retain the majority of the cytoplasmic pool of mRNAs for later reuse and recovery from stress. Functionally, catalytic subunit of the poly(A)-nuclease (PAN) deadenylation complex, one of two cytoplasmic mRNA deadenylases involved in mRNA turnover. PAN specifically shortens poly(A) tails of RNA and the activity is stimulated by poly(A)-binding protein PAB1. PAN deadenylation is followed by rapid degradation of the shortened mRNA tails by the CCR4-NOT complex. Deadenylated mRNAs are then degraded by two alternative mechanisms, namely exosome-mediated 3'-5' exonucleolytic degradation, or deadenylation-dependent mRNA decaping by DCP1-DCP2 and subsequent 5'-3' exonucleolytic degradation by XRN1. May also be involved in post-transcriptional maturation of mRNA poly(A) tails, trimming the tails from their synthesized length to the slightly shorter, apparently messenger-specific length found on newly exported mRNAs. PAN cooperates with protein kinase DUN1 in the regulation of RAD5 mRNA levels and cell survival in response to replicational stress. The chain is PAN2-PAN3 deadenylation complex catalytic subunit PAN2 from Saccharomyces cerevisiae (strain ATCC 204508 / S288c) (Baker's yeast).